We begin with the raw amino-acid sequence, 51 residues long: Mitochondrial import receptor subunit TOM5 homolog (51 aa).

At Met-1 the chain carries N-acetylmethionine. Lys-10 participates in a covalent cross-link: Glycyl lysine isopeptide (Lys-Gly) (interchain with G-Cter in SUMO2). Residues 27-45 (SIRNFLIYVALLRVTPFIL) traverse the membrane as a helical segment.

Belongs to the Tom5 family. In terms of assembly, forms part of the preprotein translocase complex of the outer mitochondrial membrane (TOM complex) which consists of at least 7 different proteins (TOMM5, TOMM6, TOMM7, TOMM20, TOMM22, TOMM40 and TOMM70).

Its subcellular location is the mitochondrion outer membrane. This chain is Mitochondrial import receptor subunit TOM5 homolog, found in Bos taurus (Bovine).